A 428-amino-acid chain; its full sequence is D-inositol 3-phosphate glycosyltransferase (428 aa).

1D-myo-inositol 3-phosphate is bound at residue H5. Residues 11 to 12 (QP) and G19 each bind UDP-N-acetyl-alpha-D-glucosamine. 1D-myo-inositol 3-phosphate is bound by residues 16–21 (DAGGMN), K74, Y107, T131, and R151. Positions 225, 230, and 283 each coordinate UDP-N-acetyl-alpha-D-glucosamine. Residues F292, Q293, and A295 each coordinate Mg(2+). Positions 305 and 313 each coordinate UDP-N-acetyl-alpha-D-glucosamine. T319 serves as a coordination point for Mg(2+).

The protein belongs to the glycosyltransferase group 1 family. MshA subfamily. In terms of assembly, homodimer.

It carries out the reaction 1D-myo-inositol 3-phosphate + UDP-N-acetyl-alpha-D-glucosamine = 1D-myo-inositol 2-acetamido-2-deoxy-alpha-D-glucopyranoside 3-phosphate + UDP + H(+). Functionally, catalyzes the transfer of a N-acetyl-glucosamine moiety to 1D-myo-inositol 3-phosphate to produce 1D-myo-inositol 2-acetamido-2-deoxy-glucopyranoside 3-phosphate in the mycothiol biosynthesis pathway. This chain is D-inositol 3-phosphate glycosyltransferase, found in Mycobacterium leprae (strain Br4923).